The chain runs to 302 residues: UPF0725 protein At1g23960 (302 aa).

Position 2 is an N-acetylalanine (alanine 2).

Belongs to the UPF0725 (EMB2204) family.

This Arabidopsis thaliana (Mouse-ear cress) protein is UPF0725 protein At1g23960.